Consider the following 718-residue polypeptide: Ribosomal RNA large subunit methyltransferase K/L (718 aa).

The THUMP domain occupies 43 to 154 (TQYRILLWSR…QDELVVSLDL (112 aa)).

Belongs to the methyltransferase superfamily. RlmKL family.

It is found in the cytoplasm. It catalyses the reaction guanosine(2445) in 23S rRNA + S-adenosyl-L-methionine = N(2)-methylguanosine(2445) in 23S rRNA + S-adenosyl-L-homocysteine + H(+). It carries out the reaction guanosine(2069) in 23S rRNA + S-adenosyl-L-methionine = N(2)-methylguanosine(2069) in 23S rRNA + S-adenosyl-L-homocysteine + H(+). Specifically methylates the guanine in position 2445 (m2G2445) and the guanine in position 2069 (m7G2069) of 23S rRNA. This chain is Ribosomal RNA large subunit methyltransferase K/L, found in Histophilus somni (strain 129Pt) (Haemophilus somnus).